The following is a 363-amino-acid chain: Dihydroorotate dehydrogenase (quinone) (363 aa).

Residues 67 to 71 and Thr91 each bind FMN; that span reads AGYDK. Lys71 serves as a coordination point for substrate. Position 116–120 (116–120) interacts with substrate; that stretch reads NRMGF. The FMN site is built by Asn145 and Asn178. Residue Asn178 coordinates substrate. The active-site Nucleophile is Ser181. Asn183 lines the substrate pocket. Residues Lys224 and Thr254 each contribute to the FMN site. A substrate-binding site is contributed by 255 to 256; it reads NT. FMN is bound by residues Gly275, Gly304, and 325–326; that span reads YS.

Belongs to the dihydroorotate dehydrogenase family. Type 2 subfamily. In terms of assembly, monomer. FMN serves as cofactor.

The protein localises to the cell membrane. The enzyme catalyses (S)-dihydroorotate + a quinone = orotate + a quinol. The protein operates within pyrimidine metabolism; UMP biosynthesis via de novo pathway; orotate from (S)-dihydroorotate (quinone route): step 1/1. Catalyzes the conversion of dihydroorotate to orotate with quinone as electron acceptor. The polypeptide is Dihydroorotate dehydrogenase (quinone) (Acidithiobacillus ferrooxidans (strain ATCC 23270 / DSM 14882 / CIP 104768 / NCIMB 8455) (Ferrobacillus ferrooxidans (strain ATCC 23270))).